A 127-amino-acid chain; its full sequence is uncharacterized protein (127 aa).

2 helical membrane passes run 48-68 and 83-103; these read LYSL…PLSI and VFLF…CLID.

The protein localises to the membrane. This is an uncharacterized protein from Saccharomyces cerevisiae (strain ATCC 204508 / S288c) (Baker's yeast).